The primary structure comprises 924 residues: DNA repair and recombination protein RDH54 (924 aa).

Positions 1–10 (MQIPKYENKP) are enriched in basic and acidic residues. 2 disordered regions span residues 1 to 21 (MQIP…GSNK) and 155 to 183 (EALS…NDGG). Residues 168–178 (TTSTTETVPST) show a composition bias toward low complexity. In terms of domain architecture, Helicase ATP-binding spans 299 to 487 (LENDSDISGC…FTIIDFINPG (189 aa)). An ATP-binding site is contributed by 346–353 (IPLTGLCK). The DEGH box signature appears at 472-475 (NDLN). A Glycyl lysine isopeptide (Lys-Gly) (interchain with G-Cter in ubiquitin) cross-link involves residue lysine 615. The Helicase C-terminal domain occupies 631–790 (KLRVLMTLLE…DSEMRNKESS (160 aa)).

The protein belongs to the SNF2/RAD54 helicase family. In terms of assembly, interacts with RAD51 and DMC1.

Its subcellular location is the nucleus. The enzyme catalyses ATP + H2O = ADP + phosphate + H(+). Involved in the recombinational repair of double-strand breaks (DSB) in DNA during mitosis and meiosis. Has DNA dependent ATPase activity. Promotes D-loop (displacement loop) formation with RAD51 recombinase. Modifies the topology of double-stranded DNA during the D-loop reaction to facilitate the invasion of the homologous duplex molecule by the initiating single-stranded DNA substrate. Required for adaptation from G2/M checkpoint arrest induced by a double strand break, by participating in monitoring the extent of single-stranded DNA produced by resection of DNA ends. This role is distinct from its roles in recombination. Promotes colocalization of RAD51 and DMC1 during meiotic recombination. Involved in crossover interference. The protein is DNA repair and recombination protein RDH54 (RDH54) of Saccharomyces cerevisiae (strain YJM789) (Baker's yeast).